We begin with the raw amino-acid sequence, 311 residues long: MDFKHVSVLLEECIENLNIKENGIYVDGTLGGAGHSSEIAKRLSDKGLLIGIDQDENAIKAAGEKLTPMKERIKLVRDNFSNIDAILQNLEIDGIDGILLDLGVSSHQLDEADRGFSYMHDAPLDMRMDTRQAVSAMEVVNSYTEKDLENIIKNYGEEKWAKRIANFIVDFRKEEPITTTHQLVDVIKRAIPKGARIDGPHPAKRTFQAIRIEVNGELEIINKTIDDAVRNLNPGGRICIITFHSLEDRIVKNAFRDLSNPCICPPEFPICRCDRKPAVKIITRKPIVPTEEELELNPRARSAKLRVAEKI.

S-adenosyl-L-methionine-binding positions include 33–35 (AGH), Asp-53, Phe-80, Asp-101, and Gln-108.

It belongs to the methyltransferase superfamily. RsmH family.

It is found in the cytoplasm. It catalyses the reaction cytidine(1402) in 16S rRNA + S-adenosyl-L-methionine = N(4)-methylcytidine(1402) in 16S rRNA + S-adenosyl-L-homocysteine + H(+). Its function is as follows. Specifically methylates the N4 position of cytidine in position 1402 (C1402) of 16S rRNA. In Alkaliphilus oremlandii (strain OhILAs) (Clostridium oremlandii (strain OhILAs)), this protein is Ribosomal RNA small subunit methyltransferase H.